The primary structure comprises 84 residues: Large ribosomal subunit protein bL27 (84 aa).

The tract at residues 1 to 20 (MAHKKAGGSTRNGRDSNPKY) is disordered.

The protein belongs to the bacterial ribosomal protein bL27 family.

The polypeptide is Large ribosomal subunit protein bL27 (Francisella tularensis subsp. tularensis (strain FSC 198)).